A 63-amino-acid chain; its full sequence is Toxin Tx7335 (63 aa).

Disulfide bonds link C3–C24, C17–C39, C25–C55, and C56–C61.

Contains 4 disulfide bonds. Expressed by the venom gland.

The protein resides in the secreted. In terms of biological role, activates bacterial pH-gated potassium channel KcsA by binding to its extracellular domain, probably at a site different from channel inhibitors. Increases both mean open time and open probability of KscA. This is Toxin Tx7335 from Dendroaspis angusticeps (Eastern green mamba).